The sequence spans 273 residues: Dermonecrotic toxin LruSicTox-alphaIC1a (273 aa).

Histidine 5 is a catalytic residue. Glutamate 25 and aspartate 27 together coordinate Mg(2+). Histidine 41 functions as the Nucleophile in the catalytic mechanism. Cystine bridges form between cysteine 45/cysteine 51 and cysteine 47/cysteine 190. Residue aspartate 85 coordinates Mg(2+).

Belongs to the arthropod phospholipase D family. Class II subfamily. The cofactor is Mg(2+). In terms of tissue distribution, expressed by the venom gland.

The protein localises to the secreted. The catalysed reaction is an N-(acyl)-sphingosylphosphocholine = an N-(acyl)-sphingosyl-1,3-cyclic phosphate + choline. It catalyses the reaction an N-(acyl)-sphingosylphosphoethanolamine = an N-(acyl)-sphingosyl-1,3-cyclic phosphate + ethanolamine. The enzyme catalyses a 1-acyl-sn-glycero-3-phosphocholine = a 1-acyl-sn-glycero-2,3-cyclic phosphate + choline. It carries out the reaction a 1-acyl-sn-glycero-3-phosphoethanolamine = a 1-acyl-sn-glycero-2,3-cyclic phosphate + ethanolamine. Dermonecrotic toxins cleave the phosphodiester linkage between the phosphate and headgroup of certain phospholipids (sphingolipid and lysolipid substrates), forming an alcohol (often choline) and a cyclic phosphate. This toxin acts on sphingomyelin (SM). It may also act on ceramide phosphoethanolamine (CPE), lysophosphatidylcholine (LPC) and lysophosphatidylethanolamine (LPE), but not on lysophosphatidylserine (LPS), and lysophosphatidylglycerol (LPG). It acts by transphosphatidylation, releasing exclusively cyclic phosphate products as second products. Induces dermonecrosis, hemolysis, increased vascular permeability, edema, inflammatory response, and platelet aggregation. The chain is Dermonecrotic toxin LruSicTox-alphaIC1a from Loxosceles rufescens (Mediterranean recluse spider).